The sequence spans 1149 residues: FH2 domain-containing protein 1 (1149 aa).

4 disordered regions span residues 18-79, 464-540, 554-660, and 681-1149; these read LATA…PPPG, NHDR…SRLS, ESAT…PLLP, and SPKS…PLQK. Composition is skewed to pro residues over residues 33-48 and 56-79; these read ASPP…PPCP and PSPP…PPPG. Residues 88-483 enclose the FH2 domain; that stretch reads GYSSLGKKKR…QLQRQKEMEQ (396 aa). The segment covering 464–485 has biased composition (basic and acidic residues); that stretch reads NHDREEQERKQLQRQKEMEQKR. Positions 486-504 are enriched in polar residues; sequence YSWSTGELGSFGRSSSEND. The residue at position 501 (Ser501) is a Phosphoserine. Residues 522-532 are compositionally biased toward low complexity; sequence PRPNSPSYRPP. Composition is skewed to polar residues over residues 554–575 and 591–604; these read ESAT…SSPR and SHGP…QASK. 2 positions are modified to phosphoserine: Ser645 and Ser655. Positions 681–693 are enriched in polar residues; it reads SPKSLEEGSQLTL. The span at 784 to 795 shows a compositional bias: basic and acidic residues; the sequence is MDSRAGGDKQEE. Low complexity predominate over residues 801 to 822; it reads GSVSSGAGEAGSSQVSSNSVSS. Basic and acidic residues predominate over residues 844–856; it reads PKDRPSRGKDAIA. Residues 926 to 947 show a composition bias toward polar residues; the sequence is ETPSSTDTPLSRRSSVRGTSDT. The MTBD; microtubule-binding domain stretch occupies residues 960 to 1086; it reads EEPRLPRSSG…VKGGSEDSAS (127 aa). The segment covering 965 to 974 has biased composition (low complexity); the sequence is PRSSGSISGR. 2 stretches are compositionally biased toward polar residues: residues 1042–1052 and 1064–1074; these read ARNTVASSSRS and TGLTRTVSQRQ. Residues 1123 to 1134 are compositionally biased toward basic and acidic residues; sequence GTTERSSLRLKD.

As to quaternary structure, interacts with CEP170. In terms of tissue distribution, brain, heart and lung (at protein level).

It is found in the golgi apparatus. Its subcellular location is the cell projection. The protein resides in the cilium. Its function is as follows. Microtubule-associated formin which regulates both actin and microtubule dynamics. Induces microtubule acetylation and stabilization and actin stress fiber formation. Regulates Golgi ribbon formation. Required for normal cilia assembly. Early in cilia assembly, may assist in the maturation and positioning of the centrosome/basal body, and once cilia assembly has initiated, may also promote cilia elongation by inhibiting disassembly. The sequence is that of FH2 domain-containing protein 1 (Fhdc1) from Mus musculus (Mouse).